The following is a 263-amino-acid chain: Ycf3-interacting protein 1, chloroplastic (263 aa).

Residues 1–71 (MASNMLQLSL…VNKEEDSATY (71 aa)) constitute a chloroplast transit peptide. A helical transmembrane segment spans residues 238–258 (ALYLVSAFPIIIGISVVLILF).

This sequence belongs to the Y3IP1/CEST family. In terms of assembly, interacts with Ycf3.

Its subcellular location is the plastid. It is found in the chloroplast thylakoid membrane. Functionally, nuclear genome-encoded factor that participates in photosystem I (PSI) biogenesis. Cooperates with the plastid genome-encoded protein PSI assembly Ycf3 in the assembly of stable PSI units in the thylakoid membrane. The protein is Ycf3-interacting protein 1, chloroplastic of Nicotiana tabacum (Common tobacco).